The primary structure comprises 99 residues: Spore coat protein F-like protein YraD (99 aa).

It belongs to the CotF family.

The protein localises to the spore coat. This Bacillus subtilis (strain 168) protein is Spore coat protein F-like protein YraD (yraD).